The chain runs to 199 residues: Recombination protein RecR (199 aa).

A C4-type zinc finger spans residues 57 to 72; it reads CQSCRTFTEQDLCPIC. The 96-residue stretch at 81–176 folds into the Toprim domain; sequence GIICVVETPA…VISRIAHGVP (96 aa).

This sequence belongs to the RecR family.

Its function is as follows. May play a role in DNA repair. It seems to be involved in an RecBC-independent recombinational process of DNA repair. It may act with RecF and RecO. In Shewanella frigidimarina (strain NCIMB 400), this protein is Recombination protein RecR.